The chain runs to 598 residues: Protein HIGH CHLOROPHYLL FLUORESCENCE PHENOTYPE 173, chloroplastic (598 aa).

The transit peptide at 1-79 (MVGSIVGSNM…ITTKESEETV (79 aa)) directs the protein to the chloroplast. Residues 42 to 106 (VIPRAQSSSS…PTLKLDDVNP (65 aa)) are disordered. Positions 73–84 (KESEETVAKKLD) are enriched in basic and acidic residues. Positions 87-97 (PPSPQSPPSPP) are enriched in pro residues.

This sequence belongs to the NmrA-type oxidoreductase family. In terms of assembly, component of a high molecular weight complex containing psbA mRNA, OHP1, OHP2 and HCF244, and PSII core proteins D1/D2, HCF136 and HCF173. Interacts with LPE1.

The protein localises to the plastid. The protein resides in the chloroplast membrane. It is found in the chloroplast thylakoid membrane. It localises to the chloroplast stroma. Functionally, auxiliary factor required, together with HCF244, for the biogenesis of photosystem II (PSII), especially for the synthesis of the reaction center proteins (e.g. D1), via the regulation of the corresponding mRNA (e.g. psbA) translation initiation (ribosomal loading) and stabilization. This chain is Protein HIGH CHLOROPHYLL FLUORESCENCE PHENOTYPE 173, chloroplastic, found in Arabidopsis thaliana (Mouse-ear cress).